Here is a 450-residue protein sequence, read N- to C-terminus: NADP-specific glutamate dehydrogenase (450 aa).

Residue Lys111 is part of the active site.

Belongs to the Glu/Leu/Phe/Val dehydrogenases family. In terms of assembly, homohexamer.

The enzyme catalyses L-glutamate + NADP(+) + H2O = 2-oxoglutarate + NH4(+) + NADPH + H(+). The sequence is that of NADP-specific glutamate dehydrogenase (GDHA) from Laccaria bicolor (strain S238N-H82 / ATCC MYA-4686) (Bicoloured deceiver).